The chain runs to 326 residues: ATP-dependent 6-phosphofructokinase (326 aa).

ATP is bound at residue G14. Residue R24–R28 coordinates ADP. Residues R75 to F76 and G105 to S108 each bind ATP. N106 is a binding site for Mg(2+). T129–D131 is a binding site for substrate. The active-site Proton acceptor is the D131. Position 158 (R158) interacts with ADP. Residues R166 and M173 to R175 contribute to the substrate site. ADP-binding positions include G189–E191, K215, and K216–A218. Substrate is bound by residues E225, R248, and H254–R257.

Belongs to the phosphofructokinase type A (PFKA) family. ATP-dependent PFK group I subfamily. Prokaryotic clade 'B1' sub-subfamily. In terms of assembly, homotetramer. It depends on Mg(2+) as a cofactor.

The protein resides in the cytoplasm. It catalyses the reaction beta-D-fructose 6-phosphate + ATP = beta-D-fructose 1,6-bisphosphate + ADP + H(+). The protein operates within carbohydrate degradation; glycolysis; D-glyceraldehyde 3-phosphate and glycerone phosphate from D-glucose: step 3/4. Its activity is regulated as follows. Allosterically activated by ADP and other diphosphonucleosides, and allosterically inhibited by phosphoenolpyruvate. Functionally, catalyzes the phosphorylation of D-fructose 6-phosphate to fructose 1,6-bisphosphate by ATP, the first committing step of glycolysis. The sequence is that of ATP-dependent 6-phosphofructokinase from Coxiella burnetii (strain RSA 493 / Nine Mile phase I).